The sequence spans 347 residues: MKPPILIIIMATIMTGTMIVMLSSHWLLIWIGFEMNMLAIIPILMKKYNPRAMEASTKYFLTQATASMLLMMGVTINLLYSGQWVISKISNPIASIMMTTALTMKLGLSPFHFWVPEVTQGVTLMSGMILLTWQKIAPMSILYQISPSINTNLLMLMALTSVLVGGWGGLNQTQLRKIMAYSSIAHMGWMAAIITYNPTMMILNLTLYILMTLSTFMLFMLNSSTTTLSLSHMWNKFPLITSMILILMLSLGGLPPLSGFIPKWMIIQELTKNNMIIIPTLMAITALLNLYFYLRLTYSTALTMFPSTNNMKMKWQFEYTKKATLLPPLIITSTMLLPLTPMLSVLD.

10 helical membrane-spanning segments follow: residues 3–23 (PPIL…VMLS), 25–45 (HWLL…PILM), 66–86 (ASML…QWVI), 93–115 (IASI…HFWV), 149–169 (INTN…GWGG), 178–198 (IMAY…TYNP), 201–221 (MILN…LFML), 237–257 (FPLI…LPPL), 274–294 (NMII…YFYL), and 325–345 (LLPP…MLSV).

This sequence belongs to the complex I subunit 2 family. Core subunit of respiratory chain NADH dehydrogenase (Complex I) which is composed of 45 different subunits. Interacts with TMEM242.

Its subcellular location is the mitochondrion inner membrane. It catalyses the reaction a ubiquinone + NADH + 5 H(+)(in) = a ubiquinol + NAD(+) + 4 H(+)(out). Core subunit of the mitochondrial membrane respiratory chain NADH dehydrogenase (Complex I) which catalyzes electron transfer from NADH through the respiratory chain, using ubiquinone as an electron acceptor. Essential for the catalytic activity and assembly of complex I. The protein is NADH-ubiquinone oxidoreductase chain 2 of Canis lupus (Gray wolf).